The primary structure comprises 87 residues: NADH dehydrogenase [ubiquinone] 1 alpha subcomplex subunit 4-like 2 (87 aa).

It belongs to the complex I NDUFA4 subunit family.

This is NADH dehydrogenase [ubiquinone] 1 alpha subcomplex subunit 4-like 2 (NDUFA4L2) from Bos taurus (Bovine).